The primary structure comprises 406 residues: Peptide antibiotic transporter SbmA (406 aa).

Over 1 to 11 the chain is Periplasmic; sequence MFKSFFPKPGT. The helical transmembrane segment at 12–32 threads the bilayer; sequence FFLSAFVWALIAVIFWQAGGG. The Cytoplasmic segment spans residues 33–56; it reads DWVARITGASGQIPISAARFWSLD. A helical transmembrane segment spans residues 57–77; that stretch reads FLIFYAYYIVCVGLFALFWFI. The Periplasmic portion of the chain corresponds to 78–87; the sequence is YSPHRWQYWS. The chain crosses the membrane as a helical span at residues 88–108; the sequence is ILGTALIIFVTWFLVEVGVAV. Residues 109–137 lie on the Cytoplasmic side of the membrane; that stretch reads NAWYAPFYDLIQTALSSPHKVTIEQFYRE. A helical transmembrane segment spans residues 138–158; sequence VGVFLGIALIAVVISVLNNFF. At 159–205 the chain is on the periplasmic side; it reads VSHYVFRWRTAMNEYYMANWQQLRHIEGAAQRVQEDTMRFASTLENM. A helical membrane pass occupies residues 206 to 226; sequence GVSFINAIMTLIAFLPVLVTL. Topologically, residues 227–242 are cytoplasmic; the sequence is SAHVPELPIIGHIPYG. Residues 243 to 263 form a helical membrane-spanning segment; that stretch reads LVIAAIVWSLMGTGLLAVVGI. At 264–331 the chain is on the periplasmic side; sequence KLPGLEFKNQ…ARILYLQVDN (68 aa). Residues 332–352 form a helical membrane-spanning segment; sequence VFGLFLLFPSIVAGTITLGLM. The Cytoplasmic portion of the chain corresponds to 353 to 406; it reads TQITNVFGQVRGAFQYLINSWTTLVELMSIYKRLRSFEHELDGDKIQEVTHTLS.

The protein belongs to the peptide uptake permease (PUP) (TC 9.A.18) family.

Its subcellular location is the cell inner membrane. In terms of biological role, uptake of antimicrobial peptides. This is Peptide antibiotic transporter SbmA (sbmA) from Escherichia coli O157:H7.